Here is a 235-residue protein sequence, read N- to C-terminus: Pyridoxine 5'-phosphate synthase (235 aa).

Asn6 lines the 3-amino-2-oxopropyl phosphate pocket. Position 8–9 (8–9 (DH)) interacts with 1-deoxy-D-xylulose 5-phosphate. Arg17 contributes to the 3-amino-2-oxopropyl phosphate binding site. The Proton acceptor role is filled by His42. 1-deoxy-D-xylulose 5-phosphate-binding residues include Arg44 and His49. The active-site Proton acceptor is the Glu69. Thr99 lines the 1-deoxy-D-xylulose 5-phosphate pocket. His188 (proton donor) is an active-site residue. 3-amino-2-oxopropyl phosphate contacts are provided by residues Gly189 and 210–211 (GH).

The protein belongs to the PNP synthase family. Homooctamer; tetramer of dimers.

The protein resides in the cytoplasm. The enzyme catalyses 3-amino-2-oxopropyl phosphate + 1-deoxy-D-xylulose 5-phosphate = pyridoxine 5'-phosphate + phosphate + 2 H2O + H(+). It participates in cofactor biosynthesis; pyridoxine 5'-phosphate biosynthesis; pyridoxine 5'-phosphate from D-erythrose 4-phosphate: step 5/5. Functionally, catalyzes the complicated ring closure reaction between the two acyclic compounds 1-deoxy-D-xylulose-5-phosphate (DXP) and 3-amino-2-oxopropyl phosphate (1-amino-acetone-3-phosphate or AAP) to form pyridoxine 5'-phosphate (PNP) and inorganic phosphate. The protein is Pyridoxine 5'-phosphate synthase of Wolbachia pipientis subsp. Culex pipiens (strain wPip).